The sequence spans 154 residues: 6,7-dimethyl-8-ribityllumazine synthase (154 aa).

5-amino-6-(D-ribitylamino)uracil contacts are provided by residues tryptophan 22, 56 to 58 (AWE), and 80 to 82 (CVV). Residue 85–86 (DT) participates in (2S)-2-hydroxy-3-oxobutyl phosphate binding. The active-site Proton donor is the histidine 88. Asparagine 113 is a 5-amino-6-(D-ribitylamino)uracil binding site. Arginine 127 lines the (2S)-2-hydroxy-3-oxobutyl phosphate pocket.

Belongs to the DMRL synthase family. As to quaternary structure, forms an icosahedral capsid composed of 60 subunits, arranged as a dodecamer of pentamers.

The catalysed reaction is (2S)-2-hydroxy-3-oxobutyl phosphate + 5-amino-6-(D-ribitylamino)uracil = 6,7-dimethyl-8-(1-D-ribityl)lumazine + phosphate + 2 H2O + H(+). The protein operates within cofactor biosynthesis; riboflavin biosynthesis; riboflavin from 2-hydroxy-3-oxobutyl phosphate and 5-amino-6-(D-ribitylamino)uracil: step 1/2. Its function is as follows. Catalyzes the formation of 6,7-dimethyl-8-ribityllumazine by condensation of 5-amino-6-(D-ribitylamino)uracil with 3,4-dihydroxy-2-butanone 4-phosphate. This is the penultimate step in the biosynthesis of riboflavin. The sequence is that of 6,7-dimethyl-8-ribityllumazine synthase from Xylella fastidiosa (strain M23).